A 382-amino-acid chain; its full sequence is F-box/kelch-repeat protein At3g16580 (382 aa).

The F-box domain maps to 9 to 55; sequence WEFSLSLPWELIEEILSRVPPESLLRFKTVSKQWNALFRDKTFINNH. 2 Kelch repeats span residues 150–196 and 334–381; these read KIFA…NIYT and WIYV…AELQ.

The sequence is that of F-box/kelch-repeat protein At3g16580 from Arabidopsis thaliana (Mouse-ear cress).